The primary structure comprises 531 residues: RNA-binding protein RO60 (531 aa).

The TROVE domain occupies 24–360 (VRNNAGGFVY…AFGNVQPANT (337 aa)). Positions 128-274 (RTGTMLLHFL…TNGLTWLLRN (147 aa)) are RNA-binding. The segment at 352–531 (FGNVQPANTR…VMTAFARGEV (180 aa)) is VWFA-like domain. A divalent metal cation is bound by residues Ser369, Ser371, and Thr438.

The protein belongs to the Ro 60 kDa family. In terms of assembly, forms oligomers upon binding DrY RNA, The multimers are of an average size of 700 kDa and are composed of around 12 molecules of Rsr-DrY RNA.

Its subcellular location is the cytoplasm. Binds to several small RNAs that accumulate during recovery from UV irradiation. Contributes to the resistance of D.radiodurans to ultraviolet irradiation. The sequence is that of RNA-binding protein RO60 from Deinococcus radiodurans (strain ATCC 13939 / DSM 20539 / JCM 16871 / CCUG 27074 / LMG 4051 / NBRC 15346 / NCIMB 9279 / VKM B-1422 / R1).